Consider the following 279-residue polypeptide: Prephenate dehydratase (279 aa).

The 177-residue stretch at 2 to 178 folds into the Prephenate dehydratase domain; sequence KIAYLGPRGS…NSTRFWLLGK (177 aa). Positions 194-270 constitute an ACT domain; the sequence is LALTLPDNLP…LGVKVRLLGN (77 aa).

It catalyses the reaction prephenate + H(+) = 3-phenylpyruvate + CO2 + H2O. It participates in amino-acid biosynthesis; L-phenylalanine biosynthesis; phenylpyruvate from prephenate: step 1/1. The polypeptide is Prephenate dehydratase (pheA) (Lactococcus lactis subsp. lactis (strain IL1403) (Streptococcus lactis)).